The chain runs to 59 residues: Cecropin-B1 (59 aa).

The signal sequence occupies residues 1-23; sequence MNFNKLFLIVILAALLLLGQTEA. The residue at position 57 (Leu57) is a Leucine amide.

Belongs to the cecropin family.

The protein resides in the secreted. Functionally, cecropins have lytic and antibacterial activity against several Gram-positive and Gram-negative bacteria. The protein is Cecropin-B1 (CECB1) of Culex pipiens pipiens (Northern house mosquito).